The primary structure comprises 303 residues: Probable cell division protein WhiA (303 aa).

The segment at residues 272–303 is a DNA-binding region (H-T-H motif); sequence SIQQVADALEFPITKSGVNHRLRKINKIADDL.

The protein belongs to the WhiA family.

Involved in cell division and chromosome segregation. The polypeptide is Probable cell division protein WhiA (Streptococcus pyogenes serotype M12 (strain MGAS2096)).